We begin with the raw amino-acid sequence, 202 residues long: Adenylyl-sulfate kinase (202 aa).

Residue 31–38 (GLSASGKS) participates in ATP binding. Serine 105 serves as the catalytic Phosphoserine intermediate.

Belongs to the APS kinase family.

The enzyme catalyses adenosine 5'-phosphosulfate + ATP = 3'-phosphoadenylyl sulfate + ADP + H(+). The protein operates within sulfur metabolism; hydrogen sulfide biosynthesis; sulfite from sulfate: step 2/3. Its function is as follows. Catalyzes the synthesis of activated sulfate. This chain is Adenylyl-sulfate kinase (MET14), found in Saccharomyces pastorianus (Lager yeast).